Consider the following 359-residue polypeptide: Small ribosomal subunit protein mS22 (359 aa).

Belongs to the mitochondrion-specific ribosomal protein mS22 family. In terms of assembly, component of the mitochondrial ribosome small subunit (28S) which comprises a 12S rRNA and about 30 distinct proteins.

The protein localises to the mitochondrion. This Bos taurus (Bovine) protein is Small ribosomal subunit protein mS22 (MRPS22).